Consider the following 213-residue polypeptide: MTDKSHQCVIIGIAGASASGKSLIASTLYRELREQVGDEHIGVIPEDSYYKDQSHLSMEERVKTNYDHPNAMDHNLLFQHLQMLKAGKPIELPVYSYVEHTRTAQTVHIEPKKVIILEGILLLTDARLREEMNFSIFVDTPLDICLMRRIKRDVNERGRSMDSVMTQYQKTVRPMFLQFIDPSKQYADIIVPRGGKNRIAIDILKAKISQFFE.

ATP is bound at residue 15–22 (GASASGKS).

Belongs to the uridine kinase family.

It is found in the cytoplasm. It carries out the reaction uridine + ATP = UMP + ADP + H(+). The catalysed reaction is cytidine + ATP = CMP + ADP + H(+). It participates in pyrimidine metabolism; CTP biosynthesis via salvage pathway; CTP from cytidine: step 1/3. The protein operates within pyrimidine metabolism; UMP biosynthesis via salvage pathway; UMP from uridine: step 1/1. This chain is Uridine kinase, found in Cronobacter sakazakii (strain ATCC BAA-894) (Enterobacter sakazakii).